Consider the following 422-residue polypeptide: Tryptophan synthase beta chain 1 (422 aa).

Lys107 carries the post-translational modification N6-(pyridoxal phosphate)lysine.

This sequence belongs to the TrpB family. Tetramer of two alpha and two beta chains. It depends on pyridoxal 5'-phosphate as a cofactor.

It carries out the reaction (1S,2R)-1-C-(indol-3-yl)glycerol 3-phosphate + L-serine = D-glyceraldehyde 3-phosphate + L-tryptophan + H2O. It functions in the pathway amino-acid biosynthesis; L-tryptophan biosynthesis; L-tryptophan from chorismate: step 5/5. Its function is as follows. The beta subunit is responsible for the synthesis of L-tryptophan from indole and L-serine. This Sulfurisphaera tokodaii (strain DSM 16993 / JCM 10545 / NBRC 100140 / 7) (Sulfolobus tokodaii) protein is Tryptophan synthase beta chain 1 (trpB1).